We begin with the raw amino-acid sequence, 166 residues long: Spiderine-1a (166 aa).

Positions 1 to 18 (MKFALVLLGVCAFYLVNA) are cleaved as a signal peptide. The propeptide occupies 19–58 (TGDLETELEASELQELQEALDLIGETPLESLEAEELEEAR). Residues 59–99 (KFKWGKLFSTAKKLYKKGKKLSKNKNFKKALKFGKQLAKNL) form a linear cationic cytotoxin domain region. In terms of domain architecture, Oxytoxin-type inhibitor cystine knot (ICK) spans 113–166 (NNKCWAIGTTCSDDCDCCPEHHCHCPAGKWLPGLFRCTCQVTESDKVNKCPPAE). Intrachain disulfides connect Cys-116-Cys-130, Cys-123-Cys-135, Cys-127-Cys-162, Cys-129-Cys-151, and Cys-137-Cys-149.

The protein belongs to the spiderine family. Cationic/spiderine subfamily. As to expression, expressed by the venom gland.

Its subcellular location is the secreted. Its function is as follows. Has antimicrobial, insecticidal, cytolytic and cytotoxic activity. Active against E.coli DH5alpha, E.faecalis VKM B 871, B.subtilis VKM B 501, A.globiformis VKM Ac 1112, P.aeruginosa PAO1 and S.aureus 209P in submicromolar or low micromolar ranges. Lyses human erythrocytes. Kills HeLA and A549 cells. In Oxyopes takobius (Lynx spider), this protein is Spiderine-1a.